Here is a 260-residue protein sequence, read N- to C-terminus: Transcription repressor OFP13 (260 aa).

Residues 150–211 (VAMESEDPYG…VSAFVDLLSG (62 aa)) enclose the OVATE domain.

In terms of tissue distribution, expressed in roots, rosette and cauline leaves, shoots, stems, flower buds and siliques.

The protein localises to the nucleus. Functionally, transcriptional repressor that regulates multiple aspects of plant growth and development through the regulation of BEL1-LIKE (BLH) and KNOX TALE (KNAT) homeodomain transcription factors. This is Transcription repressor OFP13 (OFP13) from Arabidopsis thaliana (Mouse-ear cress).